Here is a 358-residue protein sequence, read N- to C-terminus: MSNLNLFETNQNKSISIMTQDITKLLDPLTEKFDGFSIKTLNVKHVDEIHELLNKHYIEDNDHIIRIIYSRDFLYWYLKYVPNNFTIGLMYKNKLVGLITALFVDMIMYDNKIKIPYINFFCIQNKIRKFGLSNILIEELKSRLLKIGVAYSLFTRMNCQNSLDKHFTSTIDFAIPINCPKLKSVGFIPDDEKLMNWKIENNPLSLMVKTDILSVTSKLNVHLQHLSVRPYLTEDSVHHFILPKKNIVYTFVKRDSRGYVTDMVSVYKHYAYILETGKIISNAQLSFYYNETMDLTQLILLLLDKLINYGFDQLIFRNFYDNGKINITRFETNGELNYYAGNISMPITCPNNMFMIPI.

Belongs to the NMT family.

The enzyme catalyses N-terminal glycyl-[protein] + tetradecanoyl-CoA = N-tetradecanoylglycyl-[protein] + CoA + H(+). Adds a myristoyl group to the N-terminal glycine residue of certain proteins. This is Putative glycylpeptide N-tetradecanoyltransferase from Acanthamoeba polyphaga (Amoeba).